The sequence spans 192 residues: Holliday junction branch migration complex subunit RuvA (192 aa).

A domain I region spans residues M1–L61. The tract at residues S62–T137 is domain II. A flexible linker region spans residues T137–A140. The interval D141–K192 is domain III.

Belongs to the RuvA family. Homotetramer. Forms an RuvA(8)-RuvB(12)-Holliday junction (HJ) complex. HJ DNA is sandwiched between 2 RuvA tetramers; dsDNA enters through RuvA and exits via RuvB. An RuvB hexamer assembles on each DNA strand where it exits the tetramer. Each RuvB hexamer is contacted by two RuvA subunits (via domain III) on 2 adjacent RuvB subunits; this complex drives branch migration. In the full resolvosome a probable DNA-RuvA(4)-RuvB(12)-RuvC(2) complex forms which resolves the HJ.

Its subcellular location is the cytoplasm. Its function is as follows. The RuvA-RuvB-RuvC complex processes Holliday junction (HJ) DNA during genetic recombination and DNA repair, while the RuvA-RuvB complex plays an important role in the rescue of blocked DNA replication forks via replication fork reversal (RFR). RuvA specifically binds to HJ cruciform DNA, conferring on it an open structure. The RuvB hexamer acts as an ATP-dependent pump, pulling dsDNA into and through the RuvAB complex. HJ branch migration allows RuvC to scan DNA until it finds its consensus sequence, where it cleaves and resolves the cruciform DNA. The protein is Holliday junction branch migration complex subunit RuvA of Lactobacillus johnsonii (strain CNCM I-12250 / La1 / NCC 533).